The chain runs to 214 residues: Orotate phosphoribosyltransferase (214 aa).

A 5-phospho-alpha-D-ribose 1-diphosphate-binding site is contributed by Lys26. An orotate-binding site is contributed by 34–35 (FF). Residues 72 to 73 (YK), Arg99, Lys100, Lys103, His105, and 124 to 132 (DDVITAGTA) each bind 5-phospho-alpha-D-ribose 1-diphosphate. 2 residues coordinate orotate: Thr128 and Arg156.

This sequence belongs to the purine/pyrimidine phosphoribosyltransferase family. PyrE subfamily. In terms of assembly, homodimer. It depends on Mg(2+) as a cofactor.

It catalyses the reaction orotidine 5'-phosphate + diphosphate = orotate + 5-phospho-alpha-D-ribose 1-diphosphate. The protein operates within pyrimidine metabolism; UMP biosynthesis via de novo pathway; UMP from orotate: step 1/2. Its function is as follows. Catalyzes the transfer of a ribosyl phosphate group from 5-phosphoribose 1-diphosphate to orotate, leading to the formation of orotidine monophosphate (OMP). This chain is Orotate phosphoribosyltransferase, found in Actinobacillus succinogenes (strain ATCC 55618 / DSM 22257 / CCUG 43843 / 130Z).